Reading from the N-terminus, the 478-residue chain is Oxidative stress-induced growth inhibitor 1 (478 aa).

Serine 12 is subject to Phosphoserine.

The protein belongs to the OKL38 family. NADPH is required as a cofactor.

The protein localises to the midbody. Monooxygenase catalytic activity. Involved in regulation of cytokinesis; promotes RHOA activity, probably acting locally at the midbody in late cytokinesis. Monooxygenase activity is involved in stabilizing transient structures between daughter cells, termed intercellular bridges, before abscission. Regulates differentiation and proliferation through the regulation of cell death. This Mus musculus (Mouse) protein is Oxidative stress-induced growth inhibitor 1.